The following is a 445-amino-acid chain: UPF0210 protein llmg_1581 (445 aa).

Belongs to the UPF0210 family. In terms of assembly, homodimer.

This Lactococcus lactis subsp. cremoris (strain MG1363) protein is UPF0210 protein llmg_1581.